The chain runs to 622 residues: Probable potassium transport system protein Kup (622 aa).

12 helical membrane passes run 8–28 (LAAL…TSVL), 50–70 (VLSV…VVLV), 100–120 (GWLL…GVIT), 137–157 (PHFG…LFAV), 169–189 (FGPV…PHIV), 203–223 (ALGF…AVVL), 247–267 (WFSV…ALLL), 285–305 (ALVP…QALI), 337–357 (IYLP…VVMF), 366–386 (AYGI…FFVI), 392–412 (YPLA…LAFF), and 419–439 (LLQG…LMMT).

Belongs to the HAK/KUP transporter (TC 2.A.72) family.

It is found in the cell inner membrane. The enzyme catalyses K(+)(in) + H(+)(in) = K(+)(out) + H(+)(out). Its function is as follows. Transport of potassium into the cell. Likely operates as a K(+):H(+) symporter. The protein is Probable potassium transport system protein Kup of Acidovorax ebreus (strain TPSY) (Diaphorobacter sp. (strain TPSY)).